The chain runs to 86 residues: Large ribosomal subunit protein bL31B (86 aa).

Belongs to the bacterial ribosomal protein bL31 family. Type B subfamily. In terms of assembly, part of the 50S ribosomal subunit.

The polypeptide is Large ribosomal subunit protein bL31B (Cupriavidus metallidurans (strain ATCC 43123 / DSM 2839 / NBRC 102507 / CH34) (Ralstonia metallidurans)).